The sequence spans 415 residues: uncharacterized protein (415 aa).

The region spanning 1 to 55 is the TRAM domain; that stretch reads MSTGTVTIDRLGAQGDGVARTEAGPVFAPFTLPGETVSLAVNKANGTLISLKEAS. Residues C63, C75, C78, and C152 each contribute to the [4Fe-4S] cluster site. Residues Q252, F279, E299, and D347 each contribute to the S-adenosyl-L-methionine site. C373 (nucleophile) is an active-site residue.

The protein belongs to the class I-like SAM-binding methyltransferase superfamily. RNA M5U methyltransferase family.

This is an uncharacterized protein from Rhizobium meliloti (strain 1021) (Ensifer meliloti).